Reading from the N-terminus, the 134-residue chain is Small ribosomal subunit protein bS16 (134 aa).

Residues 79–134 form a disordered region; that stretch reads AGIAKRPSRNNPTKGEPGKKAQERLALAKQAEEEASAKAAEAAAAAAAPAEEAASE. Residues 115–134 are compositionally biased toward low complexity; that stretch reads AKAAEAAAAAAAPAEEAASE.

Belongs to the bacterial ribosomal protein bS16 family.

In Brucella abortus (strain S19), this protein is Small ribosomal subunit protein bS16.